Consider the following 329-residue polypeptide: MSVLEENRPFAQQLSNVYFTILSLFCFKLFVKISLAILSHFYIVKGNRKEAARIAAEFYGVTQGQGSWADRSPLHEAASQGRLLALRTLLSQGYNVNAVTLDHVTPLHEACLGDHVACARTLLEAGANVNAITIDGVTPLFNACSQGSPSCAELLLEYGAKAQLESCLPSPTHEAASKGHHECLDILISWGIDVDQEIPHLGTPLYVACMSQQFHCIWKLLYAGADVQKGKYWDTPLHAAAQQSSTEIVNLLLEFGADINAKNTELLRPIDVATSSSMVERILLQHEATPSSLYQLCRLCIRSYIGKPRLHLIPQLQLPTLLKNFLQYR.

6 ANK repeats span residues 69 to 98 (ADRS…NVNA), 102 to 131 (DHVT…NVNA), 135 to 164 (DGVT…KAQL), 167 to 196 (CLPS…DVDQ), 200 to 229 (HLGT…DVQK), and 232 to 261 (YWDT…DINA). The SOCS box domain maps to 278–329 (MVERILLQHEATPSSLYQLCRLCIRSYIGKPRLHLIPQLQLPTLLKNFLQYR).

The protein belongs to the ankyrin SOCS box (ASB) family.

It participates in protein modification; protein ubiquitination. Its function is as follows. May be a substrate-recognition component of a SCF-like ECS (Elongin-Cullin-SOCS-box protein) E3 ubiquitin-protein ligase complex which mediates the ubiquitination and subsequent proteasomal degradation of target proteins. May play a role in the initiation of arteriogenesis. In Homo sapiens (Human), this protein is Ankyrin repeat and SOCS box protein 5 (ASB5).